Reading from the N-terminus, the 357-residue chain is Acyl-coenzyme A diphosphatase NUDT19 (357 aa).

The Nudix hydrolase domain occupies 10 to 242 (AATVMLAAGW…IWLAPPQFYE (233 aa)). Residues 72-93 (PRFGLGPEPPRQPPFPGLSHGD) are disordered. The segment covering 78 to 87 (PEPPRQPPFP) has biased composition (pro residues). Positions 97–118 (AALPDDVALRICAIREAFEEAG) match the Nudix box motif. Glu-112 and Glu-116 together coordinate Mg(2+). Lys-300 is modified (N6-succinyllysine). The short motif at 355–357 (AHL) is the Microbody targeting signal element.

This sequence belongs to the Nudix hydrolase family. Monomer. Requires Mg(2+) as cofactor. Mn(2+) serves as cofactor. As to expression, highly expressed in the kidneys, with lower levels in skeletal muscle and brain (at protein level).

The protein localises to the peroxisome. It catalyses the reaction an acyl-CoA + H2O = an acyl-4'-phosphopantetheine + adenosine 3',5'-bisphosphate + 2 H(+). The catalysed reaction is CoA + H2O = (R)-4'-phosphopantetheine + adenosine 3',5'-bisphosphate + 2 H(+). It carries out the reaction hexanoyl-CoA + H2O = hexanoyl-4'-phosphopantetheine + adenosine 3',5'-bisphosphate + 2 H(+). The enzyme catalyses octanoyl-CoA + H2O = S-octanoyl-4'-phosphopantetheine + adenosine 3',5'-bisphosphate + 2 H(+). It catalyses the reaction butanoyl-CoA + H2O = S-butanoyl-4'-phosphopantetheine + adenosine 3',5'-bisphosphate + 2 H(+). The catalysed reaction is propanoyl-CoA + H2O = propanoyl-4'-phosphopantetheine + adenosine 3',5'-bisphosphate + 2 H(+). It carries out the reaction malonyl-CoA + H2O = malonyl-4'-phosphopantetheine + adenosine 3',5'-bisphosphate + 2 H(+). The enzyme catalyses succinyl-CoA + H2O = succinyl-4'-phosphopantetheine + adenosine 3',5'-bisphosphate + 2 H(+). It catalyses the reaction choloyl-CoA + H2O = S-choloyl-4'-phosphopantetheine + adenosine 3',5'-bisphosphate + 2 H(+). The catalysed reaction is 4,8-dimethylnonanoyl-CoA + H2O = S-(4,8-dimethylnonanoyl)-4'-phosphopantetheine + adenosine 3',5'-bisphosphate + 2 H(+). It carries out the reaction (9Z,12Z,15Z)-octadecatrienoyl-CoA + H2O = S-(9Z,12Z,15Z-octadecatrienoyl)-4'-phosphopantetheine + adenosine 3',5'-bisphosphate + 2 H(+). The enzyme catalyses (9Z,12Z)-octadecadienoyl-CoA + H2O = S-(9Z,12Z-octadecadienoyl)-4'-phosphopantetheine + adenosine 3',5'-bisphosphate + 2 H(+). It catalyses the reaction (9Z)-hexadecenoyl-CoA + H2O = S-(9Z-hexadecenoyl)-4'-phosphopantetheine + adenosine 3',5'-bisphosphate + 2 H(+). The catalysed reaction is (9Z)-tetradecenoyl-CoA + H2O = S-(9Z-tetradecenoyl)-4'-phosphopantetheine + adenosine 3',5'-bisphosphate + 2 H(+). It carries out the reaction (6Z)-octenoyl-CoA + H2O = S-(6Z-octenoyl)-4'-phosphopantetheine + adenosine 3',5'-bisphosphate + 2 H(+). The enzyme catalyses hexadecanoyl-CoA + H2O = S-hexadecanoyl-4'-phosphopantetheine + adenosine 3',5'-bisphosphate + 2 H(+). It catalyses the reaction tetradecanoyl-CoA + H2O = tetradecanoyl-4'-phosphopantetheine + adenosine 3',5'-bisphosphate + 2 H(+). The catalysed reaction is dodecanoyl-CoA + H2O = S-dodecanoyl-4'-phosphopantetheine + adenosine 3',5'-bisphosphate + 2 H(+). It carries out the reaction a 5'-end CoA-ribonucleoside in mRNA + H2O = a 5'-end phospho-adenosine-phospho-ribonucleoside in mRNA + (R)-4'-phosphopantetheine + 2 H(+). With respect to regulation, inhibited by chenodeoxycholic acid (CDCA) and its conjugated derivatives, taurochenodeoxycholic acid and glycochenodeoxycholic acid. Inhibited by fluoride. Functionally, fatty acyl-coenzyme A (CoA) diphosphatase that hydrolyzes fatty acyl-CoA to yield acyl-4'-phosphopantetheine and adenosine 3',5'-bisphosphate. Mediates the hydrolysis of a wide range of CoA esters, including choloyl-CoA and branched-chain fatty-acyl-CoA esters and at low substrate concentrations medium and long-chain fatty-acyl-CoA esters are the primary substrates. Highest activity seen with medium-chain acyl-CoA esters and higher rates of activity seen with the unsaturated acyl-CoA esters compared with the saturated esters. Exhibits decapping activity towards dpCoA-capped RNAs in vitro. The sequence is that of Acyl-coenzyme A diphosphatase NUDT19 (Nudt19) from Mus musculus (Mouse).